A 398-amino-acid chain; its full sequence is Phosphoglycerate kinase (398 aa).

Residues 21–23 (DFN), Arg-36, 59–62 (HLGR), Arg-119, and Arg-157 contribute to the substrate site. ATP-binding positions include Lys-208, Gly-296, Glu-327, and 354–357 (GGDS).

Belongs to the phosphoglycerate kinase family. As to quaternary structure, monomer.

It localises to the cytoplasm. The enzyme catalyses (2R)-3-phosphoglycerate + ATP = (2R)-3-phospho-glyceroyl phosphate + ADP. It functions in the pathway carbohydrate degradation; glycolysis; pyruvate from D-glyceraldehyde 3-phosphate: step 2/5. This chain is Phosphoglycerate kinase, found in Streptococcus pyogenes serotype M5 (strain Manfredo).